A 247-amino-acid polypeptide reads, in one-letter code: tRNA pseudouridine synthase A (247 aa).

Asp-57 (nucleophile) is an active-site residue. Residue Tyr-115 coordinates substrate.

Belongs to the tRNA pseudouridine synthase TruA family. Homodimer.

It carries out the reaction uridine(38/39/40) in tRNA = pseudouridine(38/39/40) in tRNA. Its function is as follows. Formation of pseudouridine at positions 38, 39 and 40 in the anticodon stem and loop of transfer RNAs. The sequence is that of tRNA pseudouridine synthase A from Chlorobaculum tepidum (strain ATCC 49652 / DSM 12025 / NBRC 103806 / TLS) (Chlorobium tepidum).